A 297-amino-acid polypeptide reads, in one-letter code: Ribosomal RNA small subunit methyltransferase H (297 aa).

Residues 30–32, D48, F75, D96, and Q103 each bind S-adenosyl-L-methionine; that span reads GGY.

Belongs to the methyltransferase superfamily. RsmH family.

The protein localises to the cytoplasm. It catalyses the reaction cytidine(1402) in 16S rRNA + S-adenosyl-L-methionine = N(4)-methylcytidine(1402) in 16S rRNA + S-adenosyl-L-homocysteine + H(+). Its function is as follows. Specifically methylates the N4 position of cytidine in position 1402 (C1402) of 16S rRNA. In Ehrlichia chaffeensis (strain ATCC CRL-10679 / Arkansas), this protein is Ribosomal RNA small subunit methyltransferase H.